A 198-amino-acid polypeptide reads, in one-letter code: Peroxiredoxin-2 (198 aa).

Position 2 is an N-acetylalanine (Ala-2). The 159-residue stretch at 6 to 164 (AHIGKPAPDF…ALRLVQAFQY (159 aa)) folds into the Thioredoxin domain. The active-site Cysteine sulfenic acid (-SOH) intermediate is Cys-51. Phosphoserine is present on Ser-112. Thr-182 bears the Phosphothreonine mark. An N6-acetyllysine modification is found at Lys-196.

Belongs to the peroxiredoxin family. AhpC/Prx1 subfamily. In terms of assembly, homodimer; disulfide-linked, upon oxidation. 5 homodimers assemble to form a ring-like decamer. Interacts with TIPIN. The enzyme can be inactivated by further oxidation of the cysteine sulfenic acid (C(P)-SOH) to sulphinic acid (C(P)-SO2H) instead of its condensation to a disulfide bond. It can be reactivated by forming a transient disulfide bond with sulfiredoxin SRXN1, which reduces the cysteine sulfinic acid in an ATP- and Mg-dependent manner. Post-translationally, acetylation increases resistance to transition to high molecular-mass complexes. Deacetylated by HDAC6 which decreases reducing activity.

It localises to the cytoplasm. The enzyme catalyses a hydroperoxide + [thioredoxin]-dithiol = an alcohol + [thioredoxin]-disulfide + H2O. Thiol-specific peroxidase that catalyzes the reduction of hydrogen peroxide and organic hydroperoxides to water and alcohols, respectively. Plays a role in cell protection against oxidative stress by detoxifying peroxides and as sensor of hydrogen peroxide-mediated signaling events. Might participate in the signaling cascades of growth factors and tumor necrosis factor-alpha by regulating the intracellular concentrations of H(2)O(2). In Rattus norvegicus (Rat), this protein is Peroxiredoxin-2 (Prdx2).